A 53-amino-acid chain; its full sequence is ETSYTLNEVVPLKEFVPEWVRIGFSATTGAEFAAHEVLSWYFNSELSVTSSSN.

This sequence belongs to the leguminous lectin family. In terms of assembly, tetramer of two alpha and two beta chains.

The polypeptide is Mannose/glucose-specific lectin alpha 2 chain (Lathyrus ochrus (Cyprus-vetch)).